The chain runs to 538 residues: Putative outer membrane porin BglH (538 aa).

Residues 1–25 (MFRRNIITSAILLMAPLAFSAQSLA) form the signal peptide.

Belongs to the porin LamB (TC 1.B.3) family.

The protein resides in the cell outer membrane. In terms of biological role, may be a sugar porin with a broad carbohydrate specificity. This chain is Putative outer membrane porin BglH (bglH), found in Escherichia coli (strain UTI89 / UPEC).